Consider the following 276-residue polypeptide: MEQSIRDEMRVLPSIDPHFEIERRIAFIKRKLQEAGCKSLVLGISGGVDSTTLGRLAQLAVDQLNEETGSNDYQFIAVRLPYGEQKDEDEAQLALSFIKPTHSISVNIKQGVDGMHAASNIALEGTGLMPEDAAKVDFVKGNVKARARMIAQYEIAGYVGGLVLGTDHSAENITGFYTKFGDGACDLAPLFGLNKRQVREVAATLGAPEVLVKKVPTADLEELAPQKADEDALNLTYEQIDDFLEGKPVSQQVVDRLVSIYKATQHKRQPIPTIYD.

43–50 (GISGGVDS) contacts ATP. Aspartate 49 contributes to the Mg(2+) binding site. Arginine 146 contacts deamido-NAD(+). Residue threonine 166 participates in ATP binding. Glutamate 171 is a binding site for Mg(2+). Positions 179 and 186 each coordinate deamido-NAD(+). Residues lysine 195 and threonine 217 each contribute to the ATP site. 266-267 (HK) is a binding site for deamido-NAD(+).

The protein belongs to the NAD synthetase family. As to quaternary structure, homodimer.

It carries out the reaction deamido-NAD(+) + NH4(+) + ATP = AMP + diphosphate + NAD(+) + H(+). Its pathway is cofactor biosynthesis; NAD(+) biosynthesis; NAD(+) from deamido-NAD(+) (ammonia route): step 1/1. Functionally, catalyzes the ATP-dependent amidation of deamido-NAD to form NAD. Uses ammonia as a nitrogen source. The chain is NH(3)-dependent NAD(+) synthetase from Vibrio parahaemolyticus serotype O3:K6 (strain RIMD 2210633).